Reading from the N-terminus, the 93-residue chain is Protamine-3 (93 aa).

The interval 1 to 93 (MGSRCAKLGT…QSPEPKQTRS (93 aa)) is disordered. Acidic residues predominate over residues 37–57 (EGEEEEEGEEEEEEEGEEEEL). A compositionally biased stretch (polar residues) spans 81 to 93 (EVQQSPEPKQTRS). A Phosphoserine modification is found at serine 85.

The protein belongs to the protamine P3 family.

Its subcellular location is the nucleus. The protein resides in the chromosome. Functionally, protamines substitute for histones in the chromatin of sperm during the haploid phase of spermatogenesis. They compact sperm DNA into a highly condensed, stable and inactive complex. This Bos taurus (Bovine) protein is Protamine-3 (PRM3).